Consider the following 248-residue polypeptide: Myelin protein P0 (248 aa).

The N-terminal stretch at 1-29 (MAPGAPSSSPSPILAALLFSSLVLSPTLA) is a signal peptide. Residues 30–143 (IVVYTDREVY…DIVGKTSQVT (114 aa)) form the Ig-like V-type domain. Over 30 to 153 (IVVYTDREVY…LYVFEKVPTR (124 aa)) the chain is Extracellular. A disulfide bridge connects residues Cys-50 and Cys-127. N-linked (GlcNAc...) (complex) asparagine glycosylation is present at Asn-122. The chain crosses the membrane as a helical span at residues 154–179 (YGVVLGAVIGGILGVVLLLLLLFYLI). Over 180–248 (RYCWLRRQAA…GLGESRKDKK (69 aa)) the chain is Cytoplasmic. Residue Ser-210 is modified to Phosphoserine; by PKC. The tract at residues 222–248 (MLDHSRSTKAASEKKSKGLGESRKDKK) is disordered. Residues 224-248 (DHSRSTKAASEKKSKGLGESRKDKK) show a composition bias toward basic and acidic residues. Phosphoserine is present on residues Ser-226 and Ser-228. Position 233 is a phosphoserine; by PKC (Ser-233). The residue at position 237 (Ser-237) is a Phosphoserine. Phosphoserine; by PKC is present on Ser-243.

The protein belongs to the myelin P0 protein family. In terms of assembly, homodimer and homotetramer. In terms of processing, N-glycosylated; contains sulfate-substituted glycan. Found only in peripheral nervous system Schwann cells.

Its subcellular location is the cell membrane. In terms of biological role, is an adhesion molecule necessary for normal myelination in the peripheral nervous system. It mediates adhesion between adjacent myelin wraps and ultimately drives myelin compaction. This is Myelin protein P0 (Mpz) from Rattus norvegicus (Rat).